The primary structure comprises 280 residues: MSWIKDQVILLTGGGSGLGLALIERFIAEGAKVGVLELSAEKATALAHCFGNDICVIHGDVVSFEDNERAVAETVRCFGKLDCFVGNAGIWDHKISLLDASPEQIDKGFDELMGVNLKGYILGAKAALPALTASEGSMIFTLSNSSWFSGGGGVLYTASKHGAVGMIRQLAYELAPVIRVNGVAPCGMPSDLRGAASLSQQDRCITDNLSLESLSAILPLQFIPQPKDFTGPYVMLASRANNRTLTGVMITADAGLSIRGIRQTTAGVMSPTKKESSDDR.

Substrate is bound at residue Ser-143. Tyr-156 (proton acceptor) is an active-site residue.

The protein belongs to the short-chain dehydrogenases/reductases (SDR) family.

The enzyme catalyses 3-(cis-5,6-dihydroxycyclohexa-1,3-dien-1-yl)propanoate + NAD(+) = 3-(2,3-dihydroxyphenyl)propanoate + NADH + H(+). It catalyses the reaction (2E)-3-(cis-5,6-dihydroxycyclohexa-1,3-dien-1-yl)prop-2-enoate + NAD(+) = (2E)-3-(2,3-dihydroxyphenyl)prop-2-enoate + NADH + H(+). It functions in the pathway aromatic compound metabolism; 3-phenylpropanoate degradation. In terms of biological role, converts 3-phenylpropionate-dihydrodiol (PP-dihydrodiol) and cinnamic acid-dihydrodiol (CI-dihydrodiol) into 3-(2,3-dihydroxylphenyl)propanoic acid (DHPP) and 2,3-dihydroxicinnamic acid (DHCI), respectively. The protein is 3-phenylpropionate-dihydrodiol/cinnamic acid-dihydrodiol dehydrogenase of Photorhabdus laumondii subsp. laumondii (strain DSM 15139 / CIP 105565 / TT01) (Photorhabdus luminescens subsp. laumondii).